A 167-amino-acid chain; its full sequence is Histidinol dehydrogenase (167 aa).

The Zn(2+) site is built by Gln-109 and His-112.

Belongs to the histidinol dehydrogenase family. As to quaternary structure, homodimer. Zn(2+) serves as cofactor.

It carries out the reaction L-histidinol + 2 NAD(+) + H2O = L-histidine + 2 NADH + 3 H(+). It participates in amino-acid biosynthesis; L-histidine biosynthesis; L-histidine from 5-phospho-alpha-D-ribose 1-diphosphate: step 9/9. Functionally, catalyzes the sequential NAD-dependent oxidations of L-histidinol to L-histidinaldehyde and then to L-histidine. This is Histidinol dehydrogenase (hisD) from Salmonella enteritidis.